The chain runs to 341 residues: Heterogeneous nuclear ribonucleoproteins A2/B1 (341 aa).

2 consecutive RRM domains span residues 9–92 (RKLF…ESGK) and 100–179 (KKLF…LSRQ). Lys-10 is covalently cross-linked (Glycyl lysine isopeptide (Lys-Gly) (interchain with G-Cter in SUMO2)). Ser-17 carries the phosphoserine modification. Arg-26 bears the Omega-N-methylarginine mark. At Ser-73 the chain carries Phosphoserine. N6,N6-dimethyllysine; alternate is present on Lys-92. Lys-92 participates in a covalent cross-link: Glycyl lysine isopeptide (Lys-Gly) (interchain with G-Cter in SUMO2); alternate. Residues Lys-100, Lys-108, and Lys-125 each participate in a glycyl lysine isopeptide (Lys-Gly) (interchain with G-Cter in SUMO2) cross-link. Thr-128 is subject to Phosphothreonine. Ser-137 carries the post-translational modification Phosphoserine. Lys-140 is covalently cross-linked (Glycyl lysine isopeptide (Lys-Gly) (interchain with G-Cter in SUMO2)). The residue at position 147 (Thr-147) is a Phosphothreonine. Residues Lys-156 and Lys-161 each participate in a glycyl lysine isopeptide (Lys-Gly) (interchain with G-Cter in SUMO2); alternate cross-link. N6-acetyllysine; alternate is present on residues Lys-156 and Lys-161. Thr-164 bears the Phosphothreonine mark. Lys-174 is covalently cross-linked (Glycyl lysine isopeptide (Lys-Gly) (interchain with G-Cter in SUMO2)). 2 positions are modified to phosphoserine: Ser-177 and Ser-189. The disordered stretch occupies residues 181 to 341 (MQEVQSSRSG…SGGYGGRSRY (161 aa)). Positions 190–211 (GRGGNFGFGDSRGGGGNFGPGP) are enriched in gly residues. An Asymmetric dimethylarginine; alternate modification is found at Arg-191. At Arg-191 the chain carries Dimethylated arginine; alternate. At Arg-191 the chain carries Omega-N-methylarginine; alternate. Residue Ser-200 is modified to Phosphoserine. Position 201 is an asymmetric dimethylarginine; alternate (Arg-201). Arg-201 carries the post-translational modification Dimethylated arginine; alternate. Arg-201 carries the post-translational modification Omega-N-methylarginine; alternate. At Ser-213 the chain carries Phosphoserine. Arg-216 is subject to Omega-N-methylarginine. Phosphoserine is present on residues Ser-219 and Ser-224. An Omega-N-methylarginine modification is found at Arg-226. Ser-247 is subject to Phosphoserine. Asymmetric dimethylarginine; alternate is present on Arg-254. Arg-254 is modified (omega-N-methylarginine; alternate). Residues 296-335 (QQPSNYGPMKSGNFGGSRNMGGPYGGGNYGPGGSGGSGGY) are nuclear targeting sequence. Positions 308 to 341 (NFGGSRNMGGPYGGGNYGPGGSGGSGGYGGRSRY) are enriched in gly residues. Ser-312 is modified (phosphoserine). Residue Arg-313 is modified to Omega-N-methylarginine. Tyr-319 carries the phosphotyrosine modification. Phosphoserine occurs at positions 329 and 332. The residue at position 335 (Tyr-335) is a Phosphotyrosine. Arg-338 is subject to Omega-N-methylarginine.

In terms of assembly, identified in the spliceosome C complex. Identified in a IGF2BP1-dependent mRNP granule complex containing untranslated mRNAs. Interacts with IGF2BP1. Interacts with C9orf72. Interacts with DGCR8. Interacts with TARDBP. Interacts with CKAP5. Interacts with PPIA/CYPA. Interacts (via C-terminus) with FAM76B; the interaction results in retention of HNRNPA2B1 in the nucleus and inhibition of the NF-kappa-B-mediated inflammatory pathway. Interacts with NF-kappa-B inhibitors NFKBIA and NFKBIE; the interaction may be mediated by the RRM2 domain of HNRNPA2B1, and HNRNPA2B1 may interact simultaneously with FAM76B and either NFKBIA or NFKBIE to form a complex. In terms of processing, sumoylated in exosomes, promoting miRNAs-binding. Post-translationally, asymmetric dimethylation at Arg-254 constitutes the major methylation site. According to a report, methylation affects subcellular location and promotes nuclear localization. According to another report, methylation at Arg-254 does not influence nucleocytoplasmic shuttling.

It localises to the nucleus. It is found in the nucleoplasm. Its subcellular location is the cytoplasmic granule. The protein resides in the secreted. The protein localises to the extracellular exosome. Heterogeneous nuclear ribonucleoprotein (hnRNP) that associates with nascent pre-mRNAs, packaging them into hnRNP particles. The hnRNP particle arrangement on nascent hnRNA is non-random and sequence-dependent and serves to condense and stabilize the transcripts and minimize tangling and knotting. Packaging plays a role in various processes such as transcription, pre-mRNA processing, RNA nuclear export, subcellular location, mRNA translation and stability of mature mRNAs. Forms hnRNP particles with at least 20 other different hnRNP and heterogeneous nuclear RNA in the nucleus. Involved in transport of specific mRNAs to the cytoplasm in oligodendrocytes and neurons: acts by specifically recognizing and binding the A2RE (21 nucleotide hnRNP A2 response element) or the A2RE11 (derivative 11 nucleotide oligonucleotide) sequence motifs present on some mRNAs, and promotes their transport to the cytoplasm. Specifically binds single-stranded telomeric DNA sequences, protecting telomeric DNA repeat against endonuclease digestion. Also binds other RNA molecules, such as primary miRNA (pri-miRNAs): acts as a nuclear 'reader' of the N6-methyladenosine (m6A) mark by specifically recognizing and binding a subset of nuclear m6A-containing pri-miRNAs. Binding to m6A-containing pri-miRNAs promotes pri-miRNA processing by enhancing binding of DGCR8 to pri-miRNA transcripts. Involved in miRNA sorting into exosomes following sumoylation, possibly by binding (m6A)-containing pre-miRNAs. Acts as a regulator of efficiency of mRNA splicing, possibly by binding to m6A-containing pre-mRNAs. Plays a role in the splicing of pyruvate kinase PKM by binding repressively to sequences flanking PKM exon 9, inhibiting exon 9 inclusion and resulting in exon 10 inclusion and production of the PKM M2 isoform. The sequence is that of Heterogeneous nuclear ribonucleoproteins A2/B1 (HNRNPA2B1) from Bos taurus (Bovine).